The following is a 444-amino-acid chain: Putative permease IIC component YwbA (444 aa).

The 414-residue stretch at 8–421 folds into the PTS EIIC type-3 domain; sequence MEEKIMPVAG…LITCAIYYPF (414 aa). The next 10 helical transmembrane spans lie at 31–51, 72–92, 104–124, 138–158, 187–207, 223–243, 246–266, 291–311, 349–371, and 402–422; these read GIIL…LTSL, LGYP…FGIA, LSAG…EVPF, GIPI…IALF, FVAL…RLLI, LGTP…AEFV, LLWS…APIW, FFQI…VLTM, PLLI…IGMS, and SGAV…YPFF.

It is found in the cell membrane. Functionally, the phosphoenolpyruvate-dependent sugar phosphotransferase system (PTS), a major carbohydrate active -transport system, catalyzes the phosphorylation of incoming sugar substrates concomitant with their translocation across the cell membrane. This chain is Putative permease IIC component YwbA (ywbA), found in Bacillus subtilis (strain 168).